A 305-amino-acid polypeptide reads, in one-letter code: Dermonecrotic toxin LrSicTox-alphaIA1ii (305 aa).

The N-terminal stretch at 1-18 (MLLYVTLILGCWSAFSES) is a signal peptide. The propeptide occupies 19 to 26 (AETDVAER). The active site involves His37. Glu57 and Asp59 together coordinate Mg(2+). Residue His73 is the Nucleophile of the active site. Intrachain disulfides connect Cys77-Cys83 and Cys79-Cys222. Mg(2+) is bound at residue Asp117. Residue Asn282 is glycosylated (N-linked (GlcNAc...) asparagine).

This sequence belongs to the arthropod phospholipase D family. Class II subfamily. Class IIa sub-subfamily. The cofactor is Mg(2+). Expressed by the venom gland.

The protein localises to the secreted. The catalysed reaction is an N-(acyl)-sphingosylphosphocholine = an N-(acyl)-sphingosyl-1,3-cyclic phosphate + choline. It carries out the reaction an N-(acyl)-sphingosylphosphoethanolamine = an N-(acyl)-sphingosyl-1,3-cyclic phosphate + ethanolamine. It catalyses the reaction a 1-acyl-sn-glycero-3-phosphocholine = a 1-acyl-sn-glycero-2,3-cyclic phosphate + choline. The enzyme catalyses a 1-acyl-sn-glycero-3-phosphoethanolamine = a 1-acyl-sn-glycero-2,3-cyclic phosphate + ethanolamine. Inhibited with low affinity by edelfosine. Functionally, dermonecrotic toxins cleave the phosphodiester linkage between the phosphate and headgroup of certain phospholipids (sphingolipid and lysolipid substrates), forming an alcohol (often choline) and a cyclic phosphate. This toxin acts on sphingomyelin (SM). It also acts on a broad range of lysophospholipids, like lysophosphatidylinositol (LPI), lysophosphatidylglycerol (LPG), lysophosphatidylethanolamine (LPE), lysobisphosphatidic acid (LBPA), lysophosphatidylserine (LPS) and lysophosphatidylcholines (LPC) of varying chain lengths. The substrate preference is LPI &gt; LPG &gt; LPS &gt; LPC &gt;&gt; LPE, LBPA. Furthermore, the enzyme also act on cyclic phosphatidic acid and lyso-platelet activating factor (LPAF, an alkyl-LPC). The enzyme does not act on sphingosylphosphorylcholine (SPC, also known as lyso-sphingomyelin) and PAF. The toxin may also act on ceramide phosphoethanolamine (CPE). It acts by transphosphatidylation, releasing exclusively cyclic phosphate products as second products. It does not exhibit detectable PLA1/2 activity. It induces dose-dependent hemolysis and dermonecrosis. Also induces increased vascular permeability, edema, inflammatory response, and platelet aggregation. The polypeptide is Dermonecrotic toxin LrSicTox-alphaIA1ii (Loxosceles reclusa (Brown recluse spider)).